The following is a 323-amino-acid chain: L-lactate dehydrogenase 1 (323 aa).

NAD(+) contacts are provided by residues Val18, Asp39, Tyr69, and 83–84 (GA). 2 residues coordinate substrate: Gln86 and Arg92. NAD(+) contacts are provided by residues Ser105, 122 to 124 (VAN), and Ser147. 124-127 (NPVD) lines the substrate pocket. 152–155 (DTGR) contacts substrate. Catalysis depends on His179, which acts as the Proton acceptor. Tyr223 is subject to Phosphotyrosine. A substrate-binding site is contributed by Thr232.

Belongs to the LDH/MDH superfamily. LDH family. In terms of assembly, homotetramer.

Its subcellular location is the cytoplasm. It carries out the reaction (S)-lactate + NAD(+) = pyruvate + NADH + H(+). It participates in fermentation; pyruvate fermentation to lactate; (S)-lactate from pyruvate: step 1/1. Functionally, catalyzes the conversion of lactate to pyruvate. The protein is L-lactate dehydrogenase 1 of Lactobacillus acidophilus (strain ATCC 700396 / NCK56 / N2 / NCFM).